Reading from the N-terminus, the 293-residue chain is Protein boule-like (293 aa).

Polar residues predominate over residues 1–16; the sequence is METESRAQSTNQTQTD. Positions 1-39 are disordered; it reads METESRAQSTNQTQTDSLSPSPNPVSPVPLNNPTSGPRY. Phosphoserine occurs at positions 19, 21, and 26. Residues 45–122 form the RRM domain; the sequence is NRIFVGGIDF…KKLNIGPAIR (78 aa). A DAZ domain is found at 172–196; sequence PSRSISSSPVMVAQPVYQQPAYHYQ.

Belongs to the RRM DAZ family. Interacts with DAZ1 and DAZL. In terms of tissue distribution, testis specific. Not expressed in early embryos, primoridal germ cells and spermatogonial cells. First expressed in the cytoplasm of spermatocytes and then persists through meiosis.

The protein resides in the cytoplasm. In terms of biological role, probable RNA-binding protein, which may be required during spermatogenesis. May act by binding to the 3'-UTR of mRNAs and regulating their translation. This Mus musculus (Mouse) protein is Protein boule-like.